Reading from the N-terminus, the 508-residue chain is Photosystem II CP47 reaction center protein (508 aa).

Helical transmembrane passes span 21–36 (AVHI…WAGS), 101–115 (IVFS…IWHW), 140–156 (GIHL…FGAF), 203–218 (IAAG…FHLS), 237–252 (VLSS…AFVV), and 457–472 (SFAL…HGAR).

Belongs to the PsbB/PsbC family. PsbB subfamily. As to quaternary structure, PSII is composed of 1 copy each of membrane proteins PsbA, PsbB, PsbC, PsbD, PsbE, PsbF, PsbH, PsbI, PsbJ, PsbK, PsbL, PsbM, PsbT, PsbX, PsbY, PsbZ, Psb30/Ycf12, at least 3 peripheral proteins of the oxygen-evolving complex and a large number of cofactors. It forms dimeric complexes. Interacts with PAM68. Interacts with HHL1. It depends on Binds multiple chlorophylls. PSII binds additional chlorophylls, carotenoids and specific lipids. as a cofactor.

Its subcellular location is the plastid. The protein resides in the chloroplast thylakoid membrane. In terms of biological role, one of the components of the core complex of photosystem II (PSII). It binds chlorophyll and helps catalyze the primary light-induced photochemical processes of PSII. PSII is a light-driven water:plastoquinone oxidoreductase, using light energy to abstract electrons from H(2)O, generating O(2) and a proton gradient subsequently used for ATP formation. The sequence is that of Photosystem II CP47 reaction center protein from Arabidopsis thaliana (Mouse-ear cress).